A 375-amino-acid chain; its full sequence is Chaperone protein DnaJ (375 aa).

The J domain maps to 5–70 (DYYELLGISR…EKRAAYDQYG (66 aa)). The CR-type zinc finger occupies 132–210 (GTTKDIKIHT…CHGDGRVNKA (79 aa)). 8 residues coordinate Zn(2+): C145, C148, C162, C165, C184, C187, C198, and C201. 4 CXXCXGXG motif repeats span residues 145–152 (CDTCHGTG), 162–169 (CPHCHGAG), 184–191 (CHFCHGTG), and 198–205 (CKTCHGDG).

Belongs to the DnaJ family. Homodimer. Zn(2+) is required as a cofactor.

It localises to the cytoplasm. In terms of biological role, participates actively in the response to hyperosmotic and heat shock by preventing the aggregation of stress-denatured proteins and by disaggregating proteins, also in an autonomous, DnaK-independent fashion. Unfolded proteins bind initially to DnaJ; upon interaction with the DnaJ-bound protein, DnaK hydrolyzes its bound ATP, resulting in the formation of a stable complex. GrpE releases ADP from DnaK; ATP binding to DnaK triggers the release of the substrate protein, thus completing the reaction cycle. Several rounds of ATP-dependent interactions between DnaJ, DnaK and GrpE are required for fully efficient folding. Also involved, together with DnaK and GrpE, in the DNA replication of plasmids through activation of initiation proteins. This is Chaperone protein DnaJ from Aggregatibacter actinomycetemcomitans (Actinobacillus actinomycetemcomitans).